The chain runs to 276 residues: Ice-binding protein (276 aa).

The first 24 residues, 1–24, serve as a signal peptide directing secretion; the sequence is MKILKRIPVLAVLLVGLMTNCSND. The Ice-binding site motif (T-A/G-X-T/N) 1 motif lies at 79–82; it reads TGIT. Cysteine 107 and cysteine 124 are oxidised to a cystine. 2 short sequence motifs (ice-binding site motif (T-A/G-X-T/N)) span residues 245–248 and 263–266; these read TGIN and TAVT.

The protein belongs to the ice-binding protein family. In terms of assembly, monomer.

It is found in the secreted. Has antifreeze activity for survival in a subzero environment. Binds to the surface of ice crystals and inhibits their growth. Has high thermal hysteresis (TH) activity, which is the ability to lower the freezing point of an aqueous solution below its melting point, and thus the freezing of the cell fluid can be prevented protecting the organism from ice damage. The TH activity of this protein is 2.2 degrees Celsius at 5 uM and 2.5 degrees Celsius at 50 uM. This chain is Ice-binding protein, found in Flavobacterium frigoris (strain PS1).